The following is a 187-amino-acid chain: Threonylcarbamoyl-AMP synthase (187 aa).

The YrdC-like domain maps to 4–187; that stretch reads TLTLSEAVTA…DARSGHILRL (184 aa).

This sequence belongs to the SUA5 family. TsaC subfamily.

Its subcellular location is the cytoplasm. The catalysed reaction is L-threonine + hydrogencarbonate + ATP = L-threonylcarbamoyladenylate + diphosphate + H2O. Its function is as follows. Required for the formation of a threonylcarbamoyl group on adenosine at position 37 (t(6)A37) in tRNAs that read codons beginning with adenine. Catalyzes the conversion of L-threonine, HCO(3)(-)/CO(2) and ATP to give threonylcarbamoyl-AMP (TC-AMP) as the acyladenylate intermediate, with the release of diphosphate. The polypeptide is Threonylcarbamoyl-AMP synthase (Xylella fastidiosa (strain M12)).